The chain runs to 192 residues: NADH-quinone oxidoreductase subunit C (192 aa).

The segment at 170–192 (LGGIPVEYKGATVPPPDERRQYA) is disordered.

The protein belongs to the complex I 30 kDa subunit family. In terms of assembly, NDH-1 is composed of 14 different subunits. Subunits NuoB, C, D, E, F, and G constitute the peripheral sector of the complex.

Its subcellular location is the cell membrane. It catalyses the reaction a quinone + NADH + 5 H(+)(in) = a quinol + NAD(+) + 4 H(+)(out). Its function is as follows. NDH-1 shuttles electrons from NADH, via FMN and iron-sulfur (Fe-S) centers, to quinones in the respiratory chain. The immediate electron acceptor for the enzyme in this species is believed to be a menaquinone. Couples the redox reaction to proton translocation (for every two electrons transferred, four hydrogen ions are translocated across the cytoplasmic membrane), and thus conserves the redox energy in a proton gradient. The sequence is that of NADH-quinone oxidoreductase subunit C from Acidothermus cellulolyticus (strain ATCC 43068 / DSM 8971 / 11B).